Here is a 238-residue protein sequence, read N- to C-terminus: Anti-sigma-K factor RskA (238 aa).

Residues 1 to 97 are Cytoplasmic-facing; the sequence is MTSPQNDLLS…RSSSRRRAAA (97 aa). The helical transmembrane segment at 98 to 118 threads the bilayer; sequence VLSAAAAVVIGLGTLAVGYAL. Residues 119–238 are Extracellular-facing; that stretch reads RPAPTPSTAE…TPVFAELPLT (120 aa).

It belongs to the anti-sigma-K factor family.

The protein resides in the cell membrane. Its function is as follows. An anti-sigma factor for extracytoplasmic function (ECF) sigma factor SigK. ECF sigma factors are held in an inactive form by an anti-sigma factor until released by regulated intramembrane proteolysis (RIP). RIP occurs when an extracytoplasmic signal triggers a concerted proteolytic cascade to transmit information and elicit cellular responses. The membrane-spanning regulatory substrate protein is first cut extracytoplasmically (site-1 protease, S1P), then within the membrane itself (site-2 protease, S2P, Rip1), while cytoplasmic proteases finish degrading the regulatory protein, liberating the sigma factor. The protein is Anti-sigma-K factor RskA (rskA) of Mycolicibacterium vanbaalenii (strain DSM 7251 / JCM 13017 / BCRC 16820 / KCTC 9966 / NRRL B-24157 / PYR-1) (Mycobacterium vanbaalenii).